The chain runs to 149 residues: 3-dehydroquinate dehydratase (149 aa).

Y24 functions as the Proton acceptor in the catalytic mechanism. 3 residues coordinate substrate: N75, H81, and D88. H101 functions as the Proton donor in the catalytic mechanism. Substrate contacts are provided by residues 102-103 (LS) and R112.

Belongs to the type-II 3-dehydroquinase family. Homododecamer.

The enzyme catalyses 3-dehydroquinate = 3-dehydroshikimate + H2O. The protein operates within metabolic intermediate biosynthesis; chorismate biosynthesis; chorismate from D-erythrose 4-phosphate and phosphoenolpyruvate: step 3/7. In terms of biological role, catalyzes a trans-dehydration via an enolate intermediate. The sequence is that of 3-dehydroquinate dehydratase from Bartonella tribocorum (strain CIP 105476 / IBS 506).